Reading from the N-terminus, the 600-residue chain is Proline--tRNA ligase (600 aa).

It belongs to the class-II aminoacyl-tRNA synthetase family. ProS type 1 subfamily. Homodimer.

It localises to the cytoplasm. The enzyme catalyses tRNA(Pro) + L-proline + ATP = L-prolyl-tRNA(Pro) + AMP + diphosphate. Functionally, catalyzes the attachment of proline to tRNA(Pro) in a two-step reaction: proline is first activated by ATP to form Pro-AMP and then transferred to the acceptor end of tRNA(Pro). As ProRS can inadvertently accommodate and process non-cognate amino acids such as alanine and cysteine, to avoid such errors it has two additional distinct editing activities against alanine. One activity is designated as 'pretransfer' editing and involves the tRNA(Pro)-independent hydrolysis of activated Ala-AMP. The other activity is designated 'posttransfer' editing and involves deacylation of mischarged Ala-tRNA(Pro). The misacylated Cys-tRNA(Pro) is not edited by ProRS. The polypeptide is Proline--tRNA ligase (Prochlorococcus marinus (strain MIT 9215)).